Reading from the N-terminus, the 126-residue chain is MGTLEIKGASLSQFSTGTAQSPWLPLHLWILCSLLAFLPLLVFIGAADCGLIASLLAIYPSWLSARFSVLLFPHWPESCSTKNTARSGALHKPAEQKLRFAQKPCHGNYTVTPCGLLHWIQSPGQL.

A helical membrane pass occupies residues 24-44 (LPLHLWILCSLLAFLPLLVFI).

As to quaternary structure, interacts with host CAMLG; this interaction allows efficient apoptosis inhibition. Additionally, interacts with vGPCR/ORF74 and induces its proteasomeal degradation.

Its subcellular location is the host membrane. The protein resides in the host mitochondrion. In terms of biological role, plays a role in the inhibition of host apoptosis to allow completion of the viral lytic replication and may thus favor the maintenance of persistent infection in infected host. The polypeptide is Protein K7 (K7) (Homo sapiens (Human)).